The sequence spans 263 residues: uncharacterized protein (263 aa).

A DOD-type homing endonuclease domain is found at 107–246 (ILGVLNGDGS…CCSFLEKLGI (140 aa)).

This is an uncharacterized protein from Methanocaldococcus jannaschii (strain ATCC 43067 / DSM 2661 / JAL-1 / JCM 10045 / NBRC 100440) (Methanococcus jannaschii).